The primary structure comprises 356 residues: Viral cathepsin (356 aa).

A signal peptide spans 1 to 40; that stretch reads MYANALVCLNPSFIKLQFHIVCTMNIIGIVTLALCSAASA. Residues 41–144 constitute a propeptide, activation peptide; sequence ADEGAAYNLQ…IILNQPPDKG (104 aa). Intrachain disulfides connect Cys165–Cys206, Cys199–Cys239, and Cys295–Cys343. Cys168 is an active-site residue. Catalysis depends on residues His302 and Asn322.

This sequence belongs to the peptidase C1 family. Synthesized as an inactive proenzyme and activated by proteolytic removal of the inhibitory propeptide.

The enzyme catalyses Endopeptidase of broad specificity, hydrolyzing substrates of both cathepsin L and cathepsin B.. Its function is as follows. Cysteine protease that plays an essential role in host liquefaction to facilitate horizontal transmission of the virus. May participate in the degradation of foreign protein expressed by the baculovirus system. In Lepidoptera (butterflies and moths), this protein is Viral cathepsin (VCATH).